The chain runs to 163 residues: Aspartate 1-decarboxylase (163 aa).

Catalysis depends on Ser-25, which acts as the Schiff-base intermediate with substrate; via pyruvic acid. The residue at position 25 (Ser-25) is a Pyruvic acid (Ser). Thr-57 contributes to the substrate binding site. Tyr-58 functions as the Proton donor in the catalytic mechanism. 73 to 75 (GAA) contributes to the substrate binding site.

Belongs to the PanD family. Heterooctamer of four alpha and four beta subunits. Requires pyruvate as cofactor. In terms of processing, is synthesized initially as an inactive proenzyme, which is activated by self-cleavage at a specific serine bond to produce a beta-subunit with a hydroxyl group at its C-terminus and an alpha-subunit with a pyruvoyl group at its N-terminus.

Its subcellular location is the cytoplasm. It catalyses the reaction L-aspartate + H(+) = beta-alanine + CO2. It functions in the pathway cofactor biosynthesis; (R)-pantothenate biosynthesis; beta-alanine from L-aspartate: step 1/1. In terms of biological role, catalyzes the pyruvoyl-dependent decarboxylation of aspartate to produce beta-alanine. This chain is Aspartate 1-decarboxylase, found in Saccharopolyspora erythraea (strain ATCC 11635 / DSM 40517 / JCM 4748 / NBRC 13426 / NCIMB 8594 / NRRL 2338).